The sequence spans 82 residues: Bowman-Birk type proteinase inhibitor (82 aa).

Residues 1-24 (SGHHDETTDEPSESSKPCCDQCSC) are disordered. 7 disulfides stabilise this stretch: C18/C72, C19/C34, C22/C68, C24/C32, C42/C49, C46/C61, and C51/C59.

The protein belongs to the Bowman-Birk serine protease inhibitor family.

Trypsin and chymotrypsin are inhibited simultaneously. There are two separate reactive sites for trypsin and chymotrypsin but they do not inhibit simultaneously. The protein is Bowman-Birk type proteinase inhibitor of Phaseolus angularis (Azuki bean).